We begin with the raw amino-acid sequence, 134 residues long: Large ribosomal subunit protein eL32 (134 aa).

The protein belongs to the eukaryotic ribosomal protein eL32 family.

In Drosophila melanogaster (Fruit fly), this protein is Large ribosomal subunit protein eL32 (RpL32).